The chain runs to 199 residues: Imidazoleglycerol-phosphate dehydratase (199 aa).

It belongs to the imidazoleglycerol-phosphate dehydratase family.

Its subcellular location is the cytoplasm. The enzyme catalyses D-erythro-1-(imidazol-4-yl)glycerol 3-phosphate = 3-(imidazol-4-yl)-2-oxopropyl phosphate + H2O. It participates in amino-acid biosynthesis; L-histidine biosynthesis; L-histidine from 5-phospho-alpha-D-ribose 1-diphosphate: step 6/9. The sequence is that of Imidazoleglycerol-phosphate dehydratase from Roseiflexus sp. (strain RS-1).